Consider the following 55-residue polypeptide: COP9 signalosome complex subunit 3 (55 aa).

One can recognise a PCI domain in the interval 1–52 (KSIQGLSASPGDLSALHGKEAEMHVLQMIQDGQIHALINQKDGMVRFLEDPE).

It belongs to the CSN3 family. In terms of assembly, component of the CSN complex, probably composed of CSN1, CSN2, CSN3, CSN4, CSN5 (CSN5A or CSN5B), CSN6 (CSN6A or CSN6B), CSN7 and CSN8.

Its subcellular location is the cytoplasm. It localises to the nucleus. Component of the COP9 signalosome complex (CSN), a complex involved in various cellular and developmental processes such as photomorphogenesis and auxin and jasmonate responses. The CSN complex is an essential regulator of the ubiquitin (Ubl) conjugation pathway by mediating the deneddylation of the cullin subunits of SCF-type E3 ligase complexes, leading to decrease the Ubl ligase activity of SCF. It is involved in repression of photomorphogenesis in darkness by regulating the activity of COP1-containing Ubl ligase complexes. This is COP9 signalosome complex subunit 3 (CSN3) from Brassica oleracea (Wild cabbage).